The sequence spans 351 residues: Probable E3 ubiquitin-protein ligase sinah (351 aa).

Positions 1-38 (MSVRNSRPQLSWPERVSPQRTIDTPTASGEMLTRRQSA) are disordered. The segment covering 18-27 (PQRTIDTPTA) has biased composition (polar residues). The RING-type zinc-finger motif lies at 106–141 (CPVCFGYIMPPIMQCPRGHLICSTCRSKLTICPVCR). The interval 155–346 (VASKLIFPCK…LALNVVIRKV (192 aa)) is SBD. The segment at 158 to 218 (KLIFPCKHSH…VYQHLMSSHE (61 aa)) adopts an SIAH-type zinc-finger fold. Residues Cys-163, Cys-170, His-182, Cys-186, Cys-193, Cys-200, His-212, and His-217 each coordinate Zn(2+).

It belongs to the SINA (Seven in absentia) family. In terms of assembly, interacts with ebi and phyl.

The enzyme catalyses S-ubiquitinyl-[E2 ubiquitin-conjugating enzyme]-L-cysteine + [acceptor protein]-L-lysine = [E2 ubiquitin-conjugating enzyme]-L-cysteine + N(6)-ubiquitinyl-[acceptor protein]-L-lysine.. The protein operates within protein modification; protein ubiquitination. Its function is as follows. E3 ubiquitin-protein ligase that mediates ubiquitination and subsequent proteasomal degradation of target proteins. The adapter phyl is required to direct the degradation of the two isoforms of the transcriptional repressor Tramtrack (Ttk). E3 ubiquitin ligases accept ubiquitin from an E2 ubiquitin-conjugating enzyme in the form of a thioester and then directly transfers the ubiquitin to targeted substrates. It probably triggers the ubiquitin-mediated degradation of different substrates. A phyl-independent mechanism of degradation exists for isoform beta of ttk that involves motifs in the C-terminus of ttk. The polypeptide is Probable E3 ubiquitin-protein ligase sinah (sinah) (Drosophila melanogaster (Fruit fly)).